The following is a 318-amino-acid chain: NAD(P)H-dependent D-xylose reductase (318 aa).

The active-site Proton donor is the Tyr-48. His-110 serves as a coordination point for substrate. NAD(+) is bound by residues Ser-165–Asn-166, Ser-214–Glu-223, and Lys-270–Asn-280.

The protein belongs to the aldo/keto reductase family.

The catalysed reaction is xylitol + NAD(+) = D-xylose + NADH + H(+). The enzyme catalyses xylitol + NADP(+) = D-xylose + NADPH + H(+). Its pathway is carbohydrate metabolism; D-xylose degradation. Its function is as follows. Reduces D-xylose into xylitol. Has a preference for NADPH, but can also utilize NADH as cosubstrate. In Pachysolen tannophilus (Yeast), this protein is NAD(P)H-dependent D-xylose reductase (XYL1).